The primary structure comprises 894 residues: Bifunctional glutamine synthetase adenylyltransferase/adenylyl-removing enzyme (894 aa).

The segment at 1 to 410 is adenylyl removase; that stretch reads MPANTSAAIA…HFEQVFILPS (410 aa). The interval 415-894 is adenylyl transferase; sequence SHPLSELWLD…QVFEQALDFS (480 aa).

Belongs to the GlnE family. Mg(2+) is required as a cofactor.

The catalysed reaction is [glutamine synthetase]-O(4)-(5'-adenylyl)-L-tyrosine + phosphate = [glutamine synthetase]-L-tyrosine + ADP. It carries out the reaction [glutamine synthetase]-L-tyrosine + ATP = [glutamine synthetase]-O(4)-(5'-adenylyl)-L-tyrosine + diphosphate. Involved in the regulation of glutamine synthetase GlnA, a key enzyme in the process to assimilate ammonia. When cellular nitrogen levels are high, the C-terminal adenylyl transferase (AT) inactivates GlnA by covalent transfer of an adenylyl group from ATP to specific tyrosine residue of GlnA, thus reducing its activity. Conversely, when nitrogen levels are low, the N-terminal adenylyl removase (AR) activates GlnA by removing the adenylyl group by phosphorolysis, increasing its activity. The regulatory region of GlnE binds the signal transduction protein PII (GlnB) which indicates the nitrogen status of the cell. This Chromobacterium violaceum (strain ATCC 12472 / DSM 30191 / JCM 1249 / CCUG 213 / NBRC 12614 / NCIMB 9131 / NCTC 9757 / MK) protein is Bifunctional glutamine synthetase adenylyltransferase/adenylyl-removing enzyme.